We begin with the raw amino-acid sequence, 605 residues long: Arginyl-tRNA--protein transferase 2 (605 aa).

Low complexity predominate over residues 496–513; sequence KVSSSSSSPQASETLLES. A disordered region spans residues 496–549; it reads KVSSSSSSPQASETLLESTSEHEDMEQGDTNDDDDEMYNSDEDSDSDSSSSRNR. Over residues 518-541 the composition is skewed to acidic residues; sequence EDMEQGDTNDDDDEMYNSDEDSDS.

This sequence belongs to the R-transferase family.

The catalysed reaction is an N-terminal L-alpha-aminoacyl-[protein] + L-arginyl-tRNA(Arg) = an N-terminal L-arginyl-L-aminoacyl-[protein] + tRNA(Arg) + H(+). Functionally, involved in the post-translational conjugation of arginine to the N-terminal aspartate or glutamate of a protein. This arginylation is required for degradation of the protein via the ubiquitin pathway. Component of the N-end rule pathway with ATE1 and PRT6. The N-end rule pathway regulates seed after-ripening, seedling sugar sensitivity, seedling lipid breakdown, and abscisic acid (ABA) sensitivity of germination. The end-rule pathway regulates various aspects of leaf and shoot development. Involved in the oxygen-dependent N-arginylation of RAP2-12, an activator of hypoxic gene expression. This N-terminal modification leads to ubiquitination by PRT6 and subsequent degradation of RAP2-12 under aerobic conditions. Involved in disease resistance. The end-rule pathway plays a role in regulating the timing and amplitude of the immune response following infection with the bacterial pathogen Pseudomonas syringae pv tomato. Regulates the biosynthesis of plant-defense metabolites such as glucosinolates, and the biosynthesis and response to the phytohormone jasmonate (JA), which plays a key role in plant immunity. The polypeptide is Arginyl-tRNA--protein transferase 2 (Arabidopsis thaliana (Mouse-ear cress)).